The following is a 244-amino-acid chain: Adenosylcobinamide-GDP ribazoletransferase (244 aa).

Transmembrane regions (helical) follow at residues L31–L51, A55–L75, I109–V129, A133–L153, and L188–W208.

Belongs to the CobS family. Mg(2+) is required as a cofactor.

The protein resides in the cell inner membrane. The catalysed reaction is alpha-ribazole + adenosylcob(III)inamide-GDP = adenosylcob(III)alamin + GMP + H(+). It catalyses the reaction alpha-ribazole 5'-phosphate + adenosylcob(III)inamide-GDP = adenosylcob(III)alamin 5'-phosphate + GMP + H(+). Its pathway is cofactor biosynthesis; adenosylcobalamin biosynthesis; adenosylcobalamin from cob(II)yrinate a,c-diamide: step 7/7. Joins adenosylcobinamide-GDP and alpha-ribazole to generate adenosylcobalamin (Ado-cobalamin). Also synthesizes adenosylcobalamin 5'-phosphate from adenosylcobinamide-GDP and alpha-ribazole 5'-phosphate. This is Adenosylcobinamide-GDP ribazoletransferase from Pseudomonas putida (strain W619).